A 284-amino-acid chain; its full sequence is MNWLHAIILGIVEGITEFLPVSSTGHLRIVEKLLGYDIQGAGITAFTAIIQVGAIIAAILYFWSDIVRIVVAWCKGLAHKEDRDDPDYTLGWGIILGSIPVGVVGLVFKDAIETTLSSLWVVAIALILWSGVMWLGDRQLGLNRGMKEIGIVDAIVIGCFQALAPLFPGISRSGATISAGLFRKFDRATATRLSFFMGIPALVAAGIYESVSAASDISIAQGGAVAIGWGPTILATVVSLIVAYVSIAWLLKFVSSNKFTGFMWYRVVVGLIIIGLILSNVVTA.

The next 8 helical transmembrane spans lie at 1–21, 43–63, 88–108, 116–136, 149–169, 193–213, 225–245, and 259–279; these read MNWL…FLPV, ITAF…LYFW, YTLG…GLVF, LSSL…MWLG, IGIV…LFPG, LSFF…SVSA, VAIG…VAYV, and FTGF…LILS.

This sequence belongs to the UppP family.

The protein resides in the cell membrane. The catalysed reaction is di-trans,octa-cis-undecaprenyl diphosphate + H2O = di-trans,octa-cis-undecaprenyl phosphate + phosphate + H(+). Catalyzes the dephosphorylation of undecaprenyl diphosphate (UPP). Confers resistance to bacitracin. In Cutibacterium acnes (strain DSM 16379 / KPA171202) (Propionibacterium acnes), this protein is Undecaprenyl-diphosphatase.